Consider the following 321-residue polypeptide: MSLTSSLLSRVLGGGSCSREELIALSREPLEELCQAANAIREHFCGNVFDLCTIINGRSGKCSENCKYCAQSAHYSTAVEEYPLLSDEALLAGARYNDARGILRYSIVTSGKRLTDEDVDRLCASYRHIAEHCGISLCASHGLISKKHCEQLKAAGVSRYHNNLETSRRNFPNVCTTHTYDDKLQTIKWALEAGLEVCSGGIMGLGETMEDRIDMYMDIAALGIKSMPVNFLTPIPGTPYADMTPLGEEEQLRIVALVRFIMPDGFVRIAAGRNTMKDHGRKIFMSGANAAISGDMLTTAGVTIREDLAMLAELGYEVRMK.

The Radical SAM core domain occupies 44–273 (FCGNVFDLCT…DGFVRIAAGR (230 aa)). [4Fe-4S] cluster is bound by residues Cys62, Cys66, and Cys69. Residues Ser106, Cys138, Cys198, and Arg268 each coordinate [2Fe-2S] cluster.

It belongs to the radical SAM superfamily. Biotin synthase family. In terms of assembly, homodimer. [4Fe-4S] cluster serves as cofactor. The cofactor is [2Fe-2S] cluster.

The catalysed reaction is (4R,5S)-dethiobiotin + (sulfur carrier)-SH + 2 reduced [2Fe-2S]-[ferredoxin] + 2 S-adenosyl-L-methionine = (sulfur carrier)-H + biotin + 2 5'-deoxyadenosine + 2 L-methionine + 2 oxidized [2Fe-2S]-[ferredoxin]. The protein operates within cofactor biosynthesis; biotin biosynthesis; biotin from 7,8-diaminononanoate: step 2/2. Catalyzes the conversion of dethiobiotin (DTB) to biotin by the insertion of a sulfur atom into dethiobiotin via a radical-based mechanism. This is Biotin synthase from Akkermansia muciniphila (strain ATCC BAA-835 / DSM 22959 / JCM 33894 / BCRC 81048 / CCUG 64013 / CIP 107961 / Muc).